Here is a 956-residue protein sequence, read N- to C-terminus: uncharacterized protein (956 aa).

Residues 918-942 (NSINEAIEKLNEAADAYQAIIDQQK) are a coiled coil.

This is an uncharacterized protein from Acanthamoeba polyphaga (Amoeba).